Here is a 286-residue protein sequence, read N- to C-terminus: Bifunctional protein FolD 2 (286 aa).

Residues 165 to 167, Thr192, and Ile233 contribute to the NADP(+) site; that span reads GRG.

The protein belongs to the tetrahydrofolate dehydrogenase/cyclohydrolase family. Homodimer.

The catalysed reaction is (6R)-5,10-methylene-5,6,7,8-tetrahydrofolate + NADP(+) = (6R)-5,10-methenyltetrahydrofolate + NADPH. It catalyses the reaction (6R)-5,10-methenyltetrahydrofolate + H2O = (6R)-10-formyltetrahydrofolate + H(+). The protein operates within one-carbon metabolism; tetrahydrofolate interconversion. Functionally, catalyzes the oxidation of 5,10-methylenetetrahydrofolate to 5,10-methenyltetrahydrofolate and then the hydrolysis of 5,10-methenyltetrahydrofolate to 10-formyltetrahydrofolate. This Salinispora tropica (strain ATCC BAA-916 / DSM 44818 / JCM 13857 / NBRC 105044 / CNB-440) protein is Bifunctional protein FolD 2.